The following is a 229-amino-acid chain: Clathrin light chain B (229 aa).

A compositionally biased stretch (low complexity) spans 1–17 (MADDFGFFSSSESGAPE). The segment at 1-82 (MADDFGFFSS…NGDVFQEANG (82 aa)) is disordered. 2 positions are modified to phosphoserine: Ser11 and Ser13. Over residues 58-73 (GPTSGAGSEDMGTTVN) the composition is skewed to polar residues. An involved in binding clathrin heavy chain region spans residues 93 to 155 (ADRLTQEPES…QVEKNKINNR (63 aa)). Position 187 is a phosphothreonine (Thr187). A disulfide bond links Cys199 and Cys209. Lys204 is subject to N6-acetyllysine. Ser217 is modified (phosphoserine).

It belongs to the clathrin light chain family. In terms of assembly, clathrin coats are formed from molecules containing 3 heavy chains and 3 light chains. Interacts (via N-terminus) with HIP1. Interacts with HIP1R.

It localises to the cytoplasmic vesicle membrane. Its subcellular location is the membrane. It is found in the coated pit. Its function is as follows. Clathrin is the major protein of the polyhedral coat of coated pits and vesicles. The chain is Clathrin light chain B (CLTB) from Homo sapiens (Human).